The sequence spans 297 residues: Phenylalanine-4-hydroxylase (297 aa).

Residues H138, H143, and E184 each contribute to the Fe cation site.

It belongs to the biopterin-dependent aromatic amino acid hydroxylase family. Monomer. The cofactor is Fe(2+).

The enzyme catalyses (6R)-L-erythro-5,6,7,8-tetrahydrobiopterin + L-phenylalanine + O2 = (4aS,6R)-4a-hydroxy-L-erythro-5,6,7,8-tetrahydrobiopterin + L-tyrosine. It functions in the pathway amino-acid degradation; L-phenylalanine degradation; acetoacetate and fumarate from L-phenylalanine: step 1/6. The polypeptide is Phenylalanine-4-hydroxylase (phhA) (Chromobacterium violaceum (strain ATCC 12472 / DSM 30191 / JCM 1249 / CCUG 213 / NBRC 12614 / NCIMB 9131 / NCTC 9757 / MK)).